The following is a 591-amino-acid chain: MDDLDALLADLESTTSHISKRPVFLSEEPPYSYPTGNHTYQEIAVPPPVPPPPSSEALNGTVLDPLDQWQPSGSRYAHQQPPSPLPVYSSSAKNSSASNTQDGVGSLCSRAGEEEHVYSFPNKQKSAEPSPTVMSSSLGSNLSELDRLLLELNAVQHSPPGFPADEAESSPPLPGALSPLYGIPENNTPLGGKAGPLVKEKPKRNGGRGLEDVRPSVESLLDELESSVPSPVPAITVNQGEMSSPQRVTSSQQQTRISASSATRELDELMASLSDFKMQGLEQRVDGERPWAAGWPPSSRQSSPEGQDEGGFMAQGKTGSSSPPGGLSKPGSQLDSMLGSLQSDLNKLGVATVAKGVCGACKKPIAGQVVTAMGKTWHPEHFVCTHCQEEIGSRNFFERDGQPYCEKDYHSLFSPRCYYCNGPILDKVVTALDRTWHPEHFFCAQCGAFFGPEGFHEKDGKAYCRKDYFDMFAPKCGGCARAILENYISALNTLWHPECFVCRECFTPFVNGSFFEHDGQPYCEVHYHERRGSLCSGCQKPITGRCITAMAKKFHPEHFVCAFCLKQLNKGTFKEQNDKPYCQSCFVKLFC.

The residue at position 1 (Met1) is an N-acetylmethionine. Residues 3-15 (DLDALLADLESTT) carry the LD motif 1 motif. Positions 17-139 (HISKRPVFLS…SPTVMSSSLG (123 aa)) are disordered. Tyr31 is subject to Phosphotyrosine; by PTK6. A compositionally biased stretch (pro residues) spans 45–54 (VPPPVPPPPS). Residue Ser83 is modified to Phosphoserine. Tyr88 is subject to Phosphotyrosine. Positions 89-99 (SSSAKNSSASN) are enriched in low complexity. Residue Ser106 is modified to Phosphoserine. Position 118 is a phosphotyrosine; by PTK6 (Tyr118). 3 positions are modified to phosphoserine: Ser119, Ser126, and Ser130. A compositionally biased stretch (polar residues) spans 121 to 137 (PNKQKSAEPSPTVMSSS). Thr132 bears the Phosphothreonine mark. Phosphoserine is present on residues Ser137, Ser140, and Ser143. An LD motif 2 motif is present at residues 144–156 (ELDRLLLELNAVQ). Positions 156–261 (QHSPPGFPAD…QQQTRISASS (106 aa)) are disordered. Position 181 is a phosphotyrosine (Tyr181). The LD motif 3 motif lies at 216–228 (SVESLLDELESSV). Ser230 is subject to Phosphoserine. Positions 236 to 261 (TVNQGEMSSPQRVTSSQQQTRISASS) are enriched in polar residues. Ser244 is modified (phosphoserine; by CDK5). A phosphoserine mark is found at Ser250, Ser258, Ser261, Ser272, Ser303, Ser322, Ser332, and Ser340. The tract at residues 262–315 (ATRELDELMASLSDFKMQGLEQRVDGERPWAAGWPPSSRQSSPEGQDEGGFMAQ) is required for binding to PARVA and ILK. The short motif at 265-276 (ELDELMASLSDF) is the LD motif 4 element. The interval 289–338 (RPWAAGWPPSSRQSSPEGQDEGGFMAQGKTGSSSPPGGLSKPGSQLDSML) is disordered. Positions 315–334 (QGKTGSSSPPGGLSKPGSQL) are enriched in low complexity. Residues 333-345 (QLDSMLGSLQSDL) carry the LD motif 5 motif. LIM zinc-binding domains are found at residues 356–415 (GVCG…LFSP), 416–473 (RCYY…DMFA), 474–533 (PKCG…RRGS), and 534–591 (LCSG…KLFC). Ser533 bears the Phosphoserine mark.

This sequence belongs to the paxillin family. Interacts in vitro with VCL/vinculin as well as to the SH3 domain of SRC and, when tyrosine phosphorylated, to the SH2 domain of CRK. Interacts with GIT1. Interacts with NUDT16L1/SDOS. Interacts with PTK2/FAK1. Interacts with PTK2B/PYK2. Interacts with ASAP2. Interacts with unphosphorylated ITGA4. Interacts with RNF5. Interacts with PDCD10. Interacts with NEK3, the interaction is prolactin-dependent. Interacts with PTK6. Interacts with TGFB1I1. Interacts with SORBS1. Interacts with PARVB. Interacts (via LD motif 4) with PARVA/PARVIN. Interacts (via LD motif 4) with ILK. Interacts (via cytoplasmic domain) with CEACAM1; the interaction is phosphotyrosyl-dependent. Interacts with LIMA1; this complex stabilizes actin dynamics. Interacts with CD36 (via C-terminus). Interacts with TRIM15. Interacts with PAK4; PAK4 acts as a scaffold to suppport PAXI phosphorylation at Ser-272. Phosphorylated by MAPK1/ERK2. Phosphorylated on tyrosine residues during integrin-mediated cell adhesion, embryonic development, fibroblast transformation and following stimulation of cells by mitogens. Phosphorylation at Ser-244 by CDK5 reduces its interaction with PTK2/FAK1 in matrix-cell focal adhesions (MCFA) during oligodendrocytes (OLs) differentiation. Phosphorylation at Tyr-31 and Tyr-118 by PTK6 promote the activation of RAC1 via CRK/CrKII, thereby promoting migration and invasion. Phosphorylation at Ser-250 by SLK is required for PXN redistribution and cell motility. Phosphorylation at Ser-272 promotes focal adhesion disassembly during cell migration.

Its subcellular location is the cytoplasm. The protein resides in the cytoskeleton. It localises to the cell junction. It is found in the focal adhesion. The protein localises to the cell cortex. In terms of biological role, cytoskeletal protein involved in actin-membrane attachment at sites of cell adhesion to the extracellular matrix (focal adhesion). Recruits other proteins such as TRIM15 to focal adhesion. This is Paxillin from Mus musculus (Mouse).